Here is a 218-residue protein sequence, read N- to C-terminus: uncharacterized protein (218 aa).

It belongs to the glycosyltransferase 2 family.

This is an uncharacterized protein from Mycobacterium bovis (strain ATCC BAA-935 / AF2122/97).